The following is a 492-amino-acid chain: Alpha-amylase-related protein (492 aa).

The signal sequence occupies residues 1–18 (MRLSLSVLLCLGLALTLA). Glutamine 19 is modified (pyrrolidone carboxylic acid). Cysteines 46 and 102 form a disulfide. 3 residues coordinate Ca(2+): asparagine 116, glutamine 167, and aspartate 176. A disulfide bridge connects residues cysteine 155 and cysteine 169. Chloride is bound at residue arginine 204. Aspartate 206 (nucleophile) is an active-site residue. Residue histidine 210 coordinates Ca(2+). Glutamate 243 functions as the Proton donor in the catalytic mechanism. 2 residues coordinate chloride: asparagine 306 and arginine 341. Intrachain disulfides connect cysteine 374-cysteine 380, cysteine 416-cysteine 439, and cysteine 446-cysteine 458.

This sequence belongs to the glycosyl hydrolase 13 family. Monomer. Ca(2+) serves as cofactor. It depends on chloride as a cofactor.

Its subcellular location is the secreted. It carries out the reaction Endohydrolysis of (1-&gt;4)-alpha-D-glucosidic linkages in polysaccharides containing three or more (1-&gt;4)-alpha-linked D-glucose units.. This is Alpha-amylase-related protein (Amyrel) from Drosophila willistoni (Fruit fly).